Consider the following 275-residue polypeptide: 3',5'-cyclic adenosine monophosphate phosphodiesterase CpdA (275 aa).

Positions 22, 24, 64, 94, 164, 203, and 205 each coordinate Fe cation. AMP is bound by residues His24, Asp64, and 94–95 (NH). His205 contributes to the AMP binding site.

This sequence belongs to the cyclic nucleotide phosphodiesterase class-III family. The cofactor is Fe(2+).

It catalyses the reaction 3',5'-cyclic AMP + H2O = AMP + H(+). Its function is as follows. Hydrolyzes cAMP to 5'-AMP. Plays an important regulatory role in modulating the intracellular concentration of cAMP, thereby influencing cAMP-dependent processes. The protein is 3',5'-cyclic adenosine monophosphate phosphodiesterase CpdA of Escherichia coli O157:H7.